A 323-amino-acid polypeptide reads, in one-letter code: o-succinylbenzoate synthase (323 aa).

K134 serves as the catalytic Proton donor. D162, E191, and D214 together coordinate Mg(2+). Residue K236 is the Proton acceptor of the active site.

It belongs to the mandelate racemase/muconate lactonizing enzyme family. MenC type 1 subfamily. The cofactor is a divalent metal cation.

It catalyses the reaction (1R,6R)-6-hydroxy-2-succinyl-cyclohexa-2,4-diene-1-carboxylate = 2-succinylbenzoate + H2O. Its pathway is quinol/quinone metabolism; 1,4-dihydroxy-2-naphthoate biosynthesis; 1,4-dihydroxy-2-naphthoate from chorismate: step 4/7. The protein operates within quinol/quinone metabolism; menaquinone biosynthesis. Its function is as follows. Converts 2-succinyl-6-hydroxy-2,4-cyclohexadiene-1-carboxylate (SHCHC) to 2-succinylbenzoate (OSB). The polypeptide is o-succinylbenzoate synthase (Proteus mirabilis (strain HI4320)).